Reading from the N-terminus, the 1000-residue chain is Vacuolar sorting protein 39 (1000 aa).

Positions 16 to 282 (PARIDAVESY…RRLVKSNNAV (267 aa)) constitute a CNH domain. The segment at 394–413 (DEASLSRGSSGISDDMESSS) is disordered. A CHCR repeat occupies 607 to 796 (YSMLVLESCP…YLNPKKSAKD (190 aa)). The segment at 844-864 (GLSSSTDSGRSDVDTEEPLEE) is disordered.

This sequence belongs to the VAM6/VPS39 family. In terms of assembly, homooligomer. Component of the homotypic fusion and vacuole protein sorting (HOPS) complex composed of the class C Vps core proteins VPS11, VCL1, VPS18 and VPS33, which in HOPS further associates with VPS39 and VPS41. Interacts directly with VPS11. Binds to RABG3B.

It is found in the cytoplasm. The protein localises to the vacuole membrane. Its function is as follows. Essential protein required during embryogenesis. Believed to act in part as a component of the putative HOPS endosomal tethering complex. HOPS is required for the central vacuole formation. May play a role in clustering and fusion of late endosomes and lysosomes. Plays a role in vesicle-mediated protein trafficking to lysosomal compartments including the endocytic membrane transport and autophagic pathways. Required for fusion of endosomes and autophagosomes with lysosomes. The polypeptide is Vacuolar sorting protein 39 (Arabidopsis thaliana (Mouse-ear cress)).